Here is a 496-residue protein sequence, read N- to C-terminus: Neuronal acetylcholine receptor subunit beta-4 (496 aa).

Positions 1 to 19 (MRSALPLVLFSLVALCGRG) are cleaved as a signal peptide. Over 20–236 (DCRVANAEEK…IIKRKPLFYT (217 aa)) the chain is Extracellular. 4 N-linked (GlcNAc...) asparagine glycosylation sites follow: Asn36, Asn93, Asn138, and Asn166. Cys153 and Cys167 are oxidised to a cystine. The chain crosses the membrane as a helical span at residues 237–257 (INLIIPCVLITSLAILVFYLP). At 258–265 (SDCGEKMT) the chain is on the cytoplasmic side. Residue Glu262 participates in Na(+) binding. A helical transmembrane segment spans residues 266–286 (LCISVLLALTVFLLLISKIVP). Residues 287 to 298 (PTSLNVPLIGKY) are Extracellular-facing. The chain crosses the membrane as a helical span at residues 299 to 319 (LMFTMVLVTFSIVTSVCVLNV). Topologically, residues 320 to 464 (HHRSPSTHTM…WKYVAMVVDR (145 aa)) are cytoplasmic. The chain crosses the membrane as a helical span at residues 465–485 (LFLWVFVVVCVLGTVGLFLPP). Residues 486–496 (LFQTHTPSEEP) lie on the Extracellular side of the membrane.

Belongs to the ligand-gated ion channel (TC 1.A.9) family. Acetylcholine receptor (TC 1.A.9.1) subfamily. Beta-4/CHRNB4 sub-subfamily. In terms of assembly, neuronal AChR is composed of two different types of subunits: alpha and beta. CHRNB4/Beta-4 subunit can be combined to CHRNA2/alpha-2, CHRNA3/alpha-3 or CHRNA4/alpha-4, CHRNA5/alpha-5 and CHRNB3/beta-3 to give rise to functional receptors. Forms stoichiometries such as (CHRNA3)2:(CHRNB4)3 or (CHRNA3:CHRNB4)2:CHRNB3. Interacts with RIC3; which is required for proper folding and assembly. Interacts with LYPD6.

The protein localises to the synaptic cell membrane. The protein resides in the cell membrane. It catalyses the reaction Ca(2+)(in) = Ca(2+)(out). The enzyme catalyses K(+)(in) = K(+)(out). It carries out the reaction Na(+)(in) = Na(+)(out). Its function is as follows. Component of neuronal acetylcholine receptors (nAChRs) that function as pentameric, ligand-gated cation channels with high calcium permeability among other activities. nAChRs are excitatory neurotrasnmitter receptors formed by a collection of nAChR subunits known to mediate synaptic transmission in the nervous system and the neuromuscular junction. Each nAchR subunit confers differential attributes to channel properties, including activation, deactivation and desensitization kinetics, pH sensitivity, cation permeability, and binding to allosteric modulators. CHRNB4 forms heteropentameric neuronal acetylcholine receptors with CHRNA2, CHRNA3 and CHRNA4, as well as CHRNA5 and CHRNB3 as accesory subunits. CHRNA3:CHRNB4 being predominant in neurons of the autonomic ganglia, it is known as ganglionic nicotinic receptor. CHRNA3:CHRNB4 or CHRNA3:CHRNA5:CHRNB4 play also an important role in the habenulo-interpeduncular tract, modulating the mesolimbic dopamine system and affecting reward circuits and addiction. Hypothalamic CHRNA3:CHRNB4 nAChR activation by nicotine leads to activation of POMC neurons and a decrease in food intake. This chain is Neuronal acetylcholine receptor subunit beta-4 (CHRNB4), found in Bos taurus (Bovine).